Consider the following 511-residue polypeptide: Maturase K (511 aa).

Belongs to the intron maturase 2 family. MatK subfamily.

The protein localises to the plastid. It localises to the chloroplast. Functionally, usually encoded in the trnK tRNA gene intron. Probably assists in splicing its own and other chloroplast group II introns. The polypeptide is Maturase K (Hordeum murinum subsp. leporinum (Mouse barley)).